A 409-amino-acid chain; its full sequence is Autophagy-related protein 37 (409 aa).

Residues 1–313 lie on the Cytoplasmic side of the membrane; the sequence is MSESIDRVFV…LKLIKTVIKH (313 aa). The ACB domain occupies 5–103; sequence IDRVFVKAIG…LIDTMKQFAS (99 aa). Residues 314–334 traverse the membrane as a helical segment; it reads VAIDAVIIAVLVAVIKRSIII. Residues 335 to 409 are Peroxisomal-facing; that stretch reads PNLISNEISL…VSRIRLIKRN (75 aa).

This sequence belongs to the ATG37 family. As to quaternary structure, interacts with ATG30 and PEX3. Post-translationally, phosphorylated.

It is found in the peroxisome membrane. Acyl-CoA binding protein which acts as the peroxisome receptor for pexophagy. Required for both micropexophagy and macropexophagy, but not for the cytoplasm to vacuole transport (Cvt) or autophagy pathways. Required for functional micropexophagic apparatus (MIPA) and relocation of ATG11 to the peroxisome-sequestering arms of the vacuole. Binds palmitoyl-CoA but not oleyl-CoA. The polypeptide is Autophagy-related protein 37 (Komagataella phaffii (strain GS115 / ATCC 20864) (Yeast)).